The primary structure comprises 541 residues: Chaperonin GroEL 1 (541 aa).

ATP-binding positions include 29 to 32 (TLGP), 86 to 90 (DGTTT), glycine 413, and aspartate 492.

It belongs to the chaperonin (HSP60) family. In terms of assembly, forms a cylinder of 14 subunits composed of two heptameric rings stacked back-to-back. Interacts with the co-chaperonin GroES.

The protein resides in the cytoplasm. It catalyses the reaction ATP + H2O + a folded polypeptide = ADP + phosphate + an unfolded polypeptide.. Functionally, together with its co-chaperonin GroES, plays an essential role in assisting protein folding. The GroEL-GroES system forms a nano-cage that allows encapsulation of the non-native substrate proteins and provides a physical environment optimized to promote and accelerate protein folding. This chain is Chaperonin GroEL 1, found in Rhodococcus jostii (strain RHA1).